We begin with the raw amino-acid sequence, 213 residues long: Ras-like protein rasU (213 aa).

21–28 (GDGGVGKT) provides a ligand contact to GTP. Positions 43–51 (YDPTIEDLY) match the Effector region motif. GTP-binding positions include 68–72 (DTAGQ) and 126–129 (NKSD). Cys210 carries the post-translational modification Cysteine methyl ester. Cys210 is lipidated: S-geranylgeranyl cysteine. Residues 211-213 (KMI) constitute a propeptide, removed in mature form.

It belongs to the small GTPase superfamily. Ras family.

It localises to the cell membrane. The catalysed reaction is GTP + H2O = GDP + phosphate + H(+). In terms of biological role, ras proteins bind GDP/GTP and possess intrinsic GTPase activity. The sequence is that of Ras-like protein rasU (rasU) from Dictyostelium discoideum (Social amoeba).